The sequence spans 294 residues: Acetylglutamate kinase (294 aa).

Substrate contacts are provided by residues 64-65 (GG), Arg-86, and Asn-189.

The protein belongs to the acetylglutamate kinase family. ArgB subfamily.

It is found in the cytoplasm. It catalyses the reaction N-acetyl-L-glutamate + ATP = N-acetyl-L-glutamyl 5-phosphate + ADP. It participates in amino-acid biosynthesis; L-arginine biosynthesis; N(2)-acetyl-L-ornithine from L-glutamate: step 2/4. Functionally, catalyzes the ATP-dependent phosphorylation of N-acetyl-L-glutamate. This Carboxydothermus hydrogenoformans (strain ATCC BAA-161 / DSM 6008 / Z-2901) protein is Acetylglutamate kinase.